The following is a 304-amino-acid chain: UDP-3-O-acyl-N-acetylglucosamine deacetylase (304 aa).

Zn(2+) is bound by residues His-78, His-237, and Asp-241. His-264 functions as the Proton donor in the catalytic mechanism.

Belongs to the LpxC family. Requires Zn(2+) as cofactor.

It carries out the reaction a UDP-3-O-[(3R)-3-hydroxyacyl]-N-acetyl-alpha-D-glucosamine + H2O = a UDP-3-O-[(3R)-3-hydroxyacyl]-alpha-D-glucosamine + acetate. It functions in the pathway glycolipid biosynthesis; lipid IV(A) biosynthesis; lipid IV(A) from (3R)-3-hydroxytetradecanoyl-[acyl-carrier-protein] and UDP-N-acetyl-alpha-D-glucosamine: step 2/6. Functionally, catalyzes the hydrolysis of UDP-3-O-myristoyl-N-acetylglucosamine to form UDP-3-O-myristoylglucosamine and acetate, the committed step in lipid A biosynthesis. The sequence is that of UDP-3-O-acyl-N-acetylglucosamine deacetylase from Legionella pneumophila (strain Lens).